The chain runs to 268 residues: Orotidine 5'-phosphate decarboxylase (268 aa).

Substrate contacts are provided by residues aspartate 39, 61 to 63, 93 to 102, tyrosine 219, and arginine 237; these read KTH and DRKFADIGNT. Lysine 95 (proton donor) is an active-site residue.

It belongs to the OMP decarboxylase family.

The catalysed reaction is orotidine 5'-phosphate + H(+) = UMP + CO2. It participates in pyrimidine metabolism; UMP biosynthesis via de novo pathway; UMP from orotate: step 2/2. The sequence is that of Orotidine 5'-phosphate decarboxylase (URA3) from Pachysolen tannophilus (Yeast).